The chain runs to 168 residues: Phosphopantetheine adenylyltransferase (168 aa).

Position 10 (T10) interacts with substrate. ATP is bound by residues 10–11 and H18; that span reads TF. K42, L75, and R89 together coordinate substrate. ATP-binding positions include 90 to 92, E100, and 125 to 131; these read GVR and YTYVASS.

This sequence belongs to the bacterial CoaD family. In terms of assembly, homohexamer. It depends on Mg(2+) as a cofactor.

It localises to the cytoplasm. The enzyme catalyses (R)-4'-phosphopantetheine + ATP + H(+) = 3'-dephospho-CoA + diphosphate. The protein operates within cofactor biosynthesis; coenzyme A biosynthesis; CoA from (R)-pantothenate: step 4/5. Functionally, reversibly transfers an adenylyl group from ATP to 4'-phosphopantetheine, yielding dephospho-CoA (dPCoA) and pyrophosphate. This is Phosphopantetheine adenylyltransferase from Prosthecochloris aestuarii (strain DSM 271 / SK 413).